A 491-amino-acid chain; its full sequence is MATQWEVVIGLETHAQLSTVSKIFSGAPTQFGAEPNTQACPVDLALPGVLPVLNRGAVERAIRFGLAIGSTIAPRSIFARKNYFYPDLPKGYQISQYEIPVVQGGQITIQVPANEKAGKPAYEKTVNLTRAHLEEDAGKSLHEDFAGMTGIDLNRAGTPLLEIVTEPEMRSAAEAVAYAKSLHALVVWLGICDGNMQEGSFRCDANVSVRPVGQEKFGTRAEIKNLNSFRFLEEAINYEVRRQIELIEDGGEVVQETRLYDPDKRETRSMRSKEDAHDYRYFPDPDLMPLVIGQDWIERVQAGMPELPAAIQQRFVEQYGVSAYDAGVLTSSKAMAAYFEAVVAKAGAANAKIAANWLMGDVSSQLNRDGIEIDAIPVSAAQLALVLQRIADGTISNKIAKEIFSAIWDEKATDEAAADRIIDAKGLKQISDTGALEAIIDEVLAANAKSVEEFRAGKEKAFNALIGQAMKATKGKANPQQVNELLKKKLG.

The protein belongs to the GatB/GatE family. GatB subfamily. Heterotrimer of A, B and C subunits.

It catalyses the reaction L-glutamyl-tRNA(Gln) + L-glutamine + ATP + H2O = L-glutaminyl-tRNA(Gln) + L-glutamate + ADP + phosphate + H(+). The catalysed reaction is L-aspartyl-tRNA(Asn) + L-glutamine + ATP + H2O = L-asparaginyl-tRNA(Asn) + L-glutamate + ADP + phosphate + 2 H(+). Its function is as follows. Allows the formation of correctly charged Asn-tRNA(Asn) or Gln-tRNA(Gln) through the transamidation of misacylated Asp-tRNA(Asn) or Glu-tRNA(Gln) in organisms which lack either or both of asparaginyl-tRNA or glutaminyl-tRNA synthetases. The reaction takes place in the presence of glutamine and ATP through an activated phospho-Asp-tRNA(Asn) or phospho-Glu-tRNA(Gln). This chain is Aspartyl/glutamyl-tRNA(Asn/Gln) amidotransferase subunit B, found in Burkholderia ambifaria (strain ATCC BAA-244 / DSM 16087 / CCUG 44356 / LMG 19182 / AMMD) (Burkholderia cepacia (strain AMMD)).